We begin with the raw amino-acid sequence, 384 residues long: Dual specificity protein phosphatase 5 (384 aa).

The Rhodanese domain maps to 19–141 (AAARCVVLDC…FYSEYPECCV (123 aa)). The Nuclear localization signal motif lies at 53-74 (RRARGGAVSARYVLPDEAARAR). The Tyrosine-protein phosphatase domain occupies 178–319 (GPVEILPFLY…LLQYESEILP (142 aa)). The active-site Phosphocysteine intermediate is the Cys263.

The protein belongs to the protein-tyrosine phosphatase family. Non-receptor class dual specificity subfamily.

The protein localises to the nucleus. It carries out the reaction O-phospho-L-tyrosyl-[protein] + H2O = L-tyrosyl-[protein] + phosphate. It catalyses the reaction O-phospho-L-seryl-[protein] + H2O = L-seryl-[protein] + phosphate. The catalysed reaction is O-phospho-L-threonyl-[protein] + H2O = L-threonyl-[protein] + phosphate. Its function is as follows. Dual specificity protein phosphatase; active with phosphotyrosine, phosphoserine and phosphothreonine residues. The highest relative activity is toward ERK1. This chain is Dual specificity protein phosphatase 5 (DUSP5), found in Homo sapiens (Human).